The following is a 596-amino-acid chain: Protein kinase C iota type (596 aa).

Residues 1–12 (MPTQRDSSTMSH) are compositionally biased toward polar residues. A disordered region spans residues 1–23 (MPTQRDSSTMSHTVAGGGSGDHS). Position 2 is an N-acetylproline (proline 2). The segment at 2–28 (PTQRDSSTMSHTVAGGGSGDHSHQVRV) is required for interaction with RAB2. The tract at residues 2–253 (PTQRDSSTMS…KASSSLGLQD (252 aa)) is regulatory domain. Threonine 3 is modified (phosphothreonine). A phosphoserine mark is found at serine 7 and serine 8. Threonine 9 is subject to Phosphothreonine. The PB1 domain occupies 25–108 (QVRVKAYYRG…SELLIHVFPC (84 aa)). Residues 72 to 91 (DEEGDPCTVSSQLELEEAFR) are interaction with PARD6A. The Pseudosubstrate motif lies at 125 to 134 (YRRGARRWRK). The Phorbol-ester/DAG-type zinc finger occupies 140–190 (GHTFQAKRFNRRAHCAICTDRIWGLGRQGYKCINCKLLVHKKCHKLVTIEC). Positions 221–246 (PSSHESLDQVGEEKEAMNTRESGKAS) are disordered. A compositionally biased stretch (basic and acidic residues) spans 225–243 (ESLDQVGEEKEAMNTRESG). One can recognise a Protein kinase domain in the interval 254-522 (FDLLRVIGRG…FADIQGHPFF (269 aa)). An ATP-binding site is contributed by 260-268 (IGRGSYAKV). Residues tyrosine 265 and tyrosine 280 each carry the phosphotyrosine; by SRC modification. Residue lysine 283 participates in ATP binding. Tyrosine 334 carries the post-translational modification Phosphotyrosine; by SRC. Residue aspartate 378 is the Proton acceptor of the active site. Threonine 412 is subject to Phosphothreonine; by PDPK1. The region spanning 523 to 594 (RNVDWDMMEQ…INPLLMSAEE (72 aa)) is the AGC-kinase C-terminal domain. Phosphothreonine is present on threonine 564.

Belongs to the protein kinase superfamily. AGC Ser/Thr protein kinase family. PKC subfamily. Forms a complex with SQSTM1 and MP2K5. Interacts directly with SQSTM1. Interacts with IKBKB. Interacts with PARD6A, PARD6B and PARD6G. Part of a quaternary complex containing aPKC, PARD3, a PARD6 protein (PARD6A, PARD6B or PARD6G) and a GTPase protein (CDC42 or RAC1). Part of a complex with LLGL1 and PARD6B. Interacts with ADAP1/CENTA1. Interaction with SMG1, through the ZN-finger domain, activates the kinase activity. Interacts with CDK7. Forms a complex with RAB2A and GAPDH involved in recruitment onto the membrane of vesicular tubular clusters (VTCs). Interacts with ECT2 ('Thr-359' phosphorylated form). Interacts with VAMP2. Interacts with WDFY2 (via WD repeats 1-3). In terms of processing, phosphorylation at Thr-412 in the activation loop is not mandatory for activation. Upon neuronal growth factor (NGF) stimulation, phosphorylated by SRC at Tyr-265, Tyr-280 and Tyr-334. Phosphorylation at Tyr-265 facilitates binding to KPNB1/importin-beta regulating entry of PRKCI into the nucleus. Phosphorylation on Tyr-334 is important for NF-kappa-B stimulation. Phosphorylated at Thr-564 during the initial phase of long term potentiation.

It localises to the cytoplasm. It is found in the membrane. The protein resides in the endosome. Its subcellular location is the nucleus. The catalysed reaction is L-seryl-[protein] + ATP = O-phospho-L-seryl-[protein] + ADP + H(+). It carries out the reaction L-threonyl-[protein] + ATP = O-phospho-L-threonyl-[protein] + ADP + H(+). Atypical PKCs (PRKCI and PRKCZ) exhibit an elevated basal enzymatic activity (that may be due to the interaction with SMG1 or SQSTM1) and are not regulated by diacylglycerol, phosphatidylserine, phorbol esters or calcium ions. Two specific sites, Thr-412 (activation loop of the kinase domain) and Thr-564 (turn motif), need to be phosphorylated for its full activation. Might also be a target for novel lipid activators that are elevated during nutrient-stimulated insulin secretion. In terms of biological role, calcium- and diacylglycerol-independent serine/ threonine-protein kinase that plays a general protective role against apoptotic stimuli, is involved in NF-kappa-B activation, cell survival, differentiation and polarity, and contributes to the regulation of microtubule dynamics in the early secretory pathway. Is necessary for BCR-ABL oncogene-mediated resistance to apoptotic drug in leukemia cells, protecting leukemia cells against drug-induced apoptosis. In cultured neurons, prevents amyloid beta protein-induced apoptosis by interrupting cell death process at a very early step. In glioblastoma cells, may function downstream of phosphatidylinositol 3-kinase (PI(3)K) and PDPK1 in the promotion of cell survival by phosphorylating and inhibiting the pro-apoptotic factor BAD. Can form a protein complex in non-small cell lung cancer (NSCLC) cells with PARD6A and ECT2 and regulate ECT2 oncogenic activity by phosphorylation, which in turn promotes transformed growth and invasion. In response to nerve growth factor (NGF), acts downstream of SRC to phosphorylate and activate IRAK1, allowing the subsequent activation of NF-kappa-B and neuronal cell survival. Functions in the organization of the apical domain in epithelial cells by phosphorylating EZR. This step is crucial for activation and normal distribution of EZR at the early stages of intestinal epithelial cell differentiation. Forms a protein complex with LLGL1 and PARD6B independently of PARD3 to regulate epithelial cell polarity. Plays a role in microtubule dynamics in the early secretory pathway through interaction with RAB2A and GAPDH and recruitment to vesicular tubular clusters (VTCs). In human coronary artery endothelial cells (HCAEC), is activated by saturated fatty acids and mediates lipid-induced apoptosis. Involved in early synaptic long term potentiation phase in CA1 hippocampal cells and short term memory formation. The polypeptide is Protein kinase C iota type (PRKCI) (Pongo abelii (Sumatran orangutan)).